We begin with the raw amino-acid sequence, 254 residues long: Cell division protein ZapD (254 aa).

This sequence belongs to the ZapD family. In terms of assembly, interacts with FtsZ.

It is found in the cytoplasm. Functionally, cell division factor that enhances FtsZ-ring assembly. Directly interacts with FtsZ and promotes bundling of FtsZ protofilaments, with a reduction in FtsZ GTPase activity. This chain is Cell division protein ZapD, found in Idiomarina loihiensis (strain ATCC BAA-735 / DSM 15497 / L2-TR).